The sequence spans 467 residues: Glycosyl hydrolase family 109 protein 1 (467 aa).

The signal sequence occupies residues 1 to 22 (MKKLLLNTLIGLALLTCQTSFA). NAD(+) is bound by residues 66–67 (MR), Asp-88, 137–140 (WKHH), 157–158 (EV), and Asn-186. Substrate-binding positions include Tyr-215, Arg-231, 243–246 (YATH), and Tyr-321. Tyr-243 is a binding site for NAD(+).

This sequence belongs to the Gfo/Idh/MocA family. Glycosyl hydrolase 109 subfamily. The cofactor is NAD(+).

In terms of biological role, glycosidase. This chain is Glycosyl hydrolase family 109 protein 1, found in Bacteroides thetaiotaomicron (strain ATCC 29148 / DSM 2079 / JCM 5827 / CCUG 10774 / NCTC 10582 / VPI-5482 / E50).